Here is a 399-residue protein sequence, read N- to C-terminus: Bifunctional enzyme IspD/IspF (399 aa).

Residues 1–235 (METWALILAA…MVEQPKTTVP (235 aa)) form a 2-C-methyl-D-erythritol 4-phosphate cytidylyltransferase region. The segment at 236-399 (IVGYGYDVHK…IVIVTAIRIS (164 aa)) is 2-C-methyl-D-erythritol 2,4-cyclodiphosphate synthase. Residues D242 and H244 each coordinate a divalent metal cation. Residues 242 to 244 (DVH) and 275 to 276 (HS) contribute to the 4-CDP-2-C-methyl-D-erythritol 2-phosphate site. Residue H283 participates in a divalent metal cation binding. 4-CDP-2-C-methyl-D-erythritol 2-phosphate-binding positions include 297-299 (DIG), 302-306 (FPDSD), 373-376 (TTEE), and F380.

It in the N-terminal section; belongs to the IspD/TarI cytidylyltransferase family. IspD subfamily. In the C-terminal section; belongs to the IspF family. The cofactor is a divalent metal cation.

It carries out the reaction 2-C-methyl-D-erythritol 4-phosphate + CTP + H(+) = 4-CDP-2-C-methyl-D-erythritol + diphosphate. It catalyses the reaction 4-CDP-2-C-methyl-D-erythritol 2-phosphate = 2-C-methyl-D-erythritol 2,4-cyclic diphosphate + CMP. The protein operates within isoprenoid biosynthesis; isopentenyl diphosphate biosynthesis via DXP pathway; isopentenyl diphosphate from 1-deoxy-D-xylulose 5-phosphate: step 2/6. It participates in isoprenoid biosynthesis; isopentenyl diphosphate biosynthesis via DXP pathway; isopentenyl diphosphate from 1-deoxy-D-xylulose 5-phosphate: step 4/6. Functionally, bifunctional enzyme that catalyzes the formation of 4-diphosphocytidyl-2-C-methyl-D-erythritol from CTP and 2-C-methyl-D-erythritol 4-phosphate (MEP) (IspD), and catalyzes the conversion of 4-diphosphocytidyl-2-C-methyl-D-erythritol 2-phosphate (CDP-ME2P) to 2-C-methyl-D-erythritol 2,4-cyclodiphosphate (ME-CPP) with a corresponding release of cytidine 5-monophosphate (CMP) (IspF). In Lawsonia intracellularis (strain PHE/MN1-00), this protein is Bifunctional enzyme IspD/IspF.